A 182-amino-acid polypeptide reads, in one-letter code: Large ribosomal subunit protein uL10 (182 aa).

This sequence belongs to the universal ribosomal protein uL10 family. As to quaternary structure, part of the ribosomal stalk of the 50S ribosomal subunit. The N-terminus interacts with L11 and the large rRNA to form the base of the stalk. The C-terminus forms an elongated spine to which L12 dimers bind in a sequential fashion forming a multimeric L10(L12)X complex.

Forms part of the ribosomal stalk, playing a central role in the interaction of the ribosome with GTP-bound translation factors. In Gluconacetobacter diazotrophicus (strain ATCC 49037 / DSM 5601 / CCUG 37298 / CIP 103539 / LMG 7603 / PAl5), this protein is Large ribosomal subunit protein uL10.